Here is a 406-residue protein sequence, read N- to C-terminus: COP9 signalosome complex subunit 4 (406 aa).

Ala-2 carries the post-translational modification N-acetylalanine. N6-acetyllysine is present on Lys-25. The region spanning 197-366 (YRRKFIEAAQ…GIVHFETREA (170 aa)) is the PCI domain.

Belongs to the CSN4 family. As to quaternary structure, component of the CSN complex, composed of COPS1/GPS1, COPS2, COPS3, COPS4, COPS5, COPS6, COPS7 (COPS7A or COPS7B), COPS8 and COPS9 isoform 1. In the complex, it probably interacts directly with COPS1, COPS2, COPS3, COPS5, COPS6, COPS7 (COPS7A or COPS7B) and COPS8. Interacts with TOR1A; the interaction is direct and associates TOR1A and SNAPIN with the CSN complex. Interacts with STON2; controls STON2 neddylation levels. Interacts with ERCC6.

The protein localises to the cytoplasm. Its subcellular location is the nucleus. The protein resides in the cytoplasmic vesicle. It localises to the secretory vesicle. It is found in the synaptic vesicle. In terms of biological role, component of the COP9 signalosome complex (CSN), a complex involved in various cellular and developmental processes. The CSN complex is an essential regulator of the ubiquitin (Ubl) conjugation pathway by mediating the deneddylation of the cullin subunits of SCF-type E3 ligase complexes, leading to decrease the Ubl ligase activity of SCF-type complexes such as SCF, CSA or DDB2. Also involved in the deneddylation of non-cullin subunits such as STON2. The complex is also involved in phosphorylation of p53/TP53, c-jun/JUN, IkappaBalpha/NFKBIA, ITPK1, IRF8/ICSBP and SNAPIN, possibly via its association with CK2 and PKD kinases. CSN-dependent phosphorylation of TP53 and JUN promotes and protects degradation by the Ubl system, respectively. This chain is COP9 signalosome complex subunit 4 (COPS4), found in Homo sapiens (Human).